We begin with the raw amino-acid sequence, 596 residues long: Uptake hydrogenase large subunit (596 aa).

Residues cysteine 75, cysteine 78, cysteine 575, and cysteine 578 each contribute to the Ni(2+) site.

Belongs to the [NiFe]/[NiFeSe] hydrogenase large subunit family. As to quaternary structure, heterodimer of a large and a small subunit. The cofactor is Ni(2+).

The protein resides in the cell membrane. It carries out the reaction H2 + A = AH2. Its function is as follows. This enzyme recycles the H(2) produced by nitrogenase to increase the production of ATP and to protect nitrogenase against inhibition or damage by O(2) under carbon- or phosphate-limited conditions. This chain is Uptake hydrogenase large subunit (hupB), found in Bradyrhizobium diazoefficiens (strain JCM 10833 / BCRC 13528 / IAM 13628 / NBRC 14792 / USDA 110).